The following is a 119-amino-acid chain: Large ribosomal subunit protein bL20 (119 aa).

It belongs to the bacterial ribosomal protein bL20 family.

Functionally, binds directly to 23S ribosomal RNA and is necessary for the in vitro assembly process of the 50S ribosomal subunit. It is not involved in the protein synthesizing functions of that subunit. The protein is Large ribosomal subunit protein bL20 of Bacillus licheniformis (strain ATCC 14580 / DSM 13 / JCM 2505 / CCUG 7422 / NBRC 12200 / NCIMB 9375 / NCTC 10341 / NRRL NRS-1264 / Gibson 46).